A 262-amino-acid chain; its full sequence is Indole-3-glycerol phosphate synthase (262 aa).

This sequence belongs to the TrpC family.

It carries out the reaction 1-(2-carboxyphenylamino)-1-deoxy-D-ribulose 5-phosphate + H(+) = (1S,2R)-1-C-(indol-3-yl)glycerol 3-phosphate + CO2 + H2O. Its pathway is amino-acid biosynthesis; L-tryptophan biosynthesis; L-tryptophan from chorismate: step 4/5. This is Indole-3-glycerol phosphate synthase from Dechloromonas aromatica (strain RCB).